Reading from the N-terminus, the 431-residue chain is Enolase (431 aa).

Glutamine 162 serves as a coordination point for (2R)-2-phosphoglycerate. Residue glutamate 204 is the Proton donor of the active site. 3 residues coordinate Mg(2+): aspartate 241, glutamate 288, and aspartate 315. 4 residues coordinate (2R)-2-phosphoglycerate: lysine 340, arginine 369, serine 370, and lysine 391. Residue lysine 340 is the Proton acceptor of the active site.

It belongs to the enolase family. Requires Mg(2+) as cofactor.

It localises to the cytoplasm. The protein resides in the secreted. It is found in the cell surface. It catalyses the reaction (2R)-2-phosphoglycerate = phosphoenolpyruvate + H2O. It functions in the pathway carbohydrate degradation; glycolysis; pyruvate from D-glyceraldehyde 3-phosphate: step 4/5. In terms of biological role, catalyzes the reversible conversion of 2-phosphoglycerate (2-PG) into phosphoenolpyruvate (PEP). It is essential for the degradation of carbohydrates via glycolysis. In Phocaeicola vulgatus (strain ATCC 8482 / DSM 1447 / JCM 5826 / CCUG 4940 / NBRC 14291 / NCTC 11154) (Bacteroides vulgatus), this protein is Enolase.